A 194-amino-acid polypeptide reads, in one-letter code: uncharacterized protein (194 aa).

Positions 45 to 138 (QLLGVPEQHR…AGPPRGDWGV (94 aa)) are disordered. 2 positions are modified to phosphoserine: Ser-69 and Ser-76. Positions 97–106 (PPLPPPPVLP) are enriched in pro residues. Over residues 107–116 (GPGEELPGAR) the composition is skewed to low complexity. Positions 117-128 (LPGGGGDDGAGR) are enriched in gly residues.

This is an uncharacterized protein from Homo sapiens (Human).